Consider the following 72-residue polypeptide: Translation initiation factor IF-1 (72 aa).

The 72-residue stretch at 1–72 (MSKEDMIEFS…TKGRITFRFK (72 aa)) folds into the S1-like domain.

It belongs to the IF-1 family. Component of the 30S ribosomal translation pre-initiation complex which assembles on the 30S ribosome in the order IF-2 and IF-3, IF-1 and N-formylmethionyl-tRNA(fMet); mRNA recruitment can occur at any time during PIC assembly.

It is found in the cytoplasm. Functionally, one of the essential components for the initiation of protein synthesis. Stabilizes the binding of IF-2 and IF-3 on the 30S subunit to which N-formylmethionyl-tRNA(fMet) subsequently binds. Helps modulate mRNA selection, yielding the 30S pre-initiation complex (PIC). Upon addition of the 50S ribosomal subunit IF-1, IF-2 and IF-3 are released leaving the mature 70S translation initiation complex. This Acidiphilium cryptum (strain JF-5) protein is Translation initiation factor IF-1.